The chain runs to 1373 residues: DNA-directed RNA polymerase subunit beta (1373 aa).

This sequence belongs to the RNA polymerase beta chain family. As to quaternary structure, the RNAP catalytic core consists of 2 alpha, 1 beta, 1 beta' and 1 omega subunit. When a sigma factor is associated with the core the holoenzyme is formed, which can initiate transcription.

The enzyme catalyses RNA(n) + a ribonucleoside 5'-triphosphate = RNA(n+1) + diphosphate. Functionally, DNA-dependent RNA polymerase catalyzes the transcription of DNA into RNA using the four ribonucleoside triphosphates as substrates. The chain is DNA-directed RNA polymerase subunit beta from Rickettsia felis (strain ATCC VR-1525 / URRWXCal2) (Rickettsia azadi).